The primary structure comprises 328 residues: POU domain, class 5, transcription factor 2 (328 aa).

The disordered stretch occupies residues 1-25 (MAGHRPSNHFCPLPGSGGGGPRGPM). A POU-specific domain is found at 118-192 (DISGILKELQ…LLKKWLKEVE (75 aa)). A DNA-binding region (homeobox) is located at residues 210 to 269 (GKWRRASRERRIGNSLEKFFQRCPKPTPQQISHIAGCLQLQKDVVRVWFYNRSKMGSRPT).

This sequence belongs to the POU transcription factor family. Class-5 subfamily. Expressed in skeletal and cardiac muscles, brain, heart and lung. Little or no detectable expression found in pancreas, kidney, liver or placenta.

The protein localises to the nucleus. Its function is as follows. Transcription factor that binds preferentially to the octamer motif (5'-ATGTTAAT-3'). May exert a regulatory function in meiotic events that are required for terminal differentiation of male germ cell. In Homo sapiens (Human), this protein is POU domain, class 5, transcription factor 2 (POU5F2).